The following is a 216-amino-acid chain: Protein-L-isoaspartate O-methyltransferase (216 aa).

The active site involves Ser60.

The protein belongs to the methyltransferase superfamily. L-isoaspartyl/D-aspartyl protein methyltransferase family.

It is found in the cytoplasm. The enzyme catalyses [protein]-L-isoaspartate + S-adenosyl-L-methionine = [protein]-L-isoaspartate alpha-methyl ester + S-adenosyl-L-homocysteine. Functionally, catalyzes the methyl esterification of L-isoaspartyl residues in peptides and proteins that result from spontaneous decomposition of normal L-aspartyl and L-asparaginyl residues. It plays a role in the repair and/or degradation of damaged proteins. In Methanococcus aeolicus (strain ATCC BAA-1280 / DSM 17508 / OCM 812 / Nankai-3), this protein is Protein-L-isoaspartate O-methyltransferase.